The chain runs to 1573 residues: Synaptojanin-1 (1573 aa).

Residues 119-442 (VRKVLNSGNF…GDSISKIYAG (324 aa)) form the SAC domain. Residues 500 to 899 (GSLRVSEQTL…GPPDGTVLVS (400 aa)) are catalytic. Serine 820 and serine 830 each carry phosphoserine. Positions 902-971 (SSLPENNFFD…RTITIALKSP (70 aa)) constitute an RRM domain. Positions 1029–1054 (HLQPSSSSGLGTSPSSSPRTSPCQSP) are enriched in low complexity. 4 disordered regions span residues 1029 to 1322 (HLQP…PLKI), 1341 to 1360 (SVQT…QLPS), 1370 to 1463 (VSCM…GFKD), and 1535 to 1573 (SRRP…FTER). Serine 1053 carries the post-translational modification Phosphoserine. Over residues 1108–1130 (PPPPRPVAPPTRPAPPQRPPPPS) the composition is skewed to pro residues. Phosphoserine occurs at positions 1150 and 1178. Arginine 1201 is modified (omega-N-methylarginine). Threonine 1220 bears the Phosphothreonine mark. Positions 1221–1234 (PESQSKTSETSKGS) are enriched in polar residues. Position 1292 is a phosphoserine (serine 1292). Residues 1293 to 1304 (SHSLPSEASSQP) show a composition bias toward low complexity. Over residues 1313–1322 (DGKRESPLKI) the composition is skewed to basic and acidic residues. A phosphoserine mark is found at serine 1318 and serine 1345. Threonine 1349 carries the phosphothreonine modification. Positions 1382-1407 (RSQSQENMRSSPNPFITGLTRTNPFS) are enriched in polar residues. Repeat copies occupy residues 1396–1398 (FIT), 1406–1408 (FSD), and 1417–1419 (FRA). The 3 X 3 AA repeats of N-P-F stretch occupies residues 1396–1419 (FITGLTRTNPFSDRTAAPGNPFRA). Pro residues predominate over residues 1536–1555 (RRPPPPPVPLLPPGTSPPVD). Phosphoserine occurs at positions 1551 and 1565.

Belongs to the synaptojanin family. This sequence in the central section; belongs to the inositol 1,4,5-trisphosphate 5-phosphatase family. Interacts with ASH/GRB2. Interacts with PACSIN1, PACSIN2 and PACSIN3. Interacts with AMPH, SH3GL1, SH3GL2 and SH3GL3. Interacts with MYO1E (via SH3 domain). Interacts with BIN1 and DNM1. Interacts with EPS15.

The protein localises to the cytoplasm. The protein resides in the perinuclear region. The enzyme catalyses a 1,2-diacyl-sn-glycero-3-phospho-(1D-myo-inositol-4,5-bisphosphate) + H2O = a 1,2-diacyl-sn-glycero-3-phospho-(1D-myo-inositol 4-phosphate) + phosphate. Its function is as follows. Phosphatase that acts on various phosphoinositides, including phosphatidylinositol 4-phosphate, phosphatidylinositol (4,5)-bisphosphate and phosphatidylinositol (3,4,5)-trisphosphate. Has a role in clathrin-mediated endocytosis. Hydrolyzes PIP2 bound to actin regulatory proteins resulting in the rearrangement of actin filaments downstream of tyrosine kinase and ASH/GRB2. The protein is Synaptojanin-1 (SYNJ1) of Homo sapiens (Human).